The following is a 649-amino-acid chain: ENTH domain-containing protein C19F8.03c (649 aa).

The ENTH domain maps to 2–136; sequence SPSKWLLTYE…VDYAQVGDAP (135 aa). Disordered stretches follow at residues 280 to 382, 409 to 440, and 590 to 649; these read YLQN…NELE, LSAEGTSASPSLDKKSESTNIVQPIPSHPNDS, and FTHG…PFRS. A phosphoserine mark is found at Ser-285 and Ser-287. A compositionally biased stretch (basic residues) spans 299–308; sequence PTLRKKKSIP. Composition is skewed to polar residues over residues 313–326 and 340–349; these read ESSSTIQKENTVQQ and PETQRTTSRI. Residues 352–381 show a composition bias toward acidic residues; that stretch reads QEEEIKEEEMEGEEEEEEEEVPNYESENEL. Composition is skewed to polar residues over residues 409-418, 614-624, and 635-649; these read LSAEGTSASP, TPYTASKNPFS, and ARNSISTESKNPFRS. The residue at position 414 (Thr-414) is a Phosphothreonine. Ser-417 carries the phosphoserine modification.

Its subcellular location is the cytoplasm. This chain is ENTH domain-containing protein C19F8.03c, found in Schizosaccharomyces pombe (strain 972 / ATCC 24843) (Fission yeast).